The chain runs to 614 residues: DNA double-strand break repair protein Mre11 (614 aa).

Aspartate 12, histidine 14, aspartate 53, and asparagine 88 together coordinate Mn(2+). Catalysis depends on histidine 89, which acts as the Proton donor. Mn(2+) contacts are provided by histidine 158, aspartate 189, and histidine 191. Disordered regions lie at residues 393-434 (ASPI…SPDI) and 487-614 (ALKK…GDYL). Over residues 411-425 (PVSSADSVSAVSPES) the composition is skewed to low complexity. 3 stretches are compositionally biased toward basic and acidic residues: residues 487-502 (ALKK…REAP), 535-558 (VPEK…KETG), and 568-591 (GSEK…EKPV).

It belongs to the MRE11/RAD32 family. As to quaternary structure, homodimer. Forms a heterotetramer composed of two Mre11 subunits and two Rad50 subunits. Mn(2+) is required as a cofactor.

Nuclease activity is regulated by Rad50. Part of the Rad50/Mre11 complex, which is involved in the early steps of DNA double-strand break (DSB) repair. The complex may facilitate opening of the processed DNA ends to aid in the recruitment of HerA and NurA. Mre11 binds to DSB ends and has both double-stranded 3'-5' exonuclease activity and single-stranded endonuclease activity. The chain is DNA double-strand break repair protein Mre11 from Methanosarcina acetivorans (strain ATCC 35395 / DSM 2834 / JCM 12185 / C2A).